The chain runs to 342 residues: S-adenosylmethionine:tRNA ribosyltransferase-isomerase (342 aa).

The protein belongs to the QueA family. As to quaternary structure, monomer.

It localises to the cytoplasm. It carries out the reaction 7-aminomethyl-7-carbaguanosine(34) in tRNA + S-adenosyl-L-methionine = epoxyqueuosine(34) in tRNA + adenine + L-methionine + 2 H(+). It participates in tRNA modification; tRNA-queuosine biosynthesis. In terms of biological role, transfers and isomerizes the ribose moiety from AdoMet to the 7-aminomethyl group of 7-deazaguanine (preQ1-tRNA) to give epoxyqueuosine (oQ-tRNA). The sequence is that of S-adenosylmethionine:tRNA ribosyltransferase-isomerase from Listeria monocytogenes serotype 4b (strain F2365).